The sequence spans 315 residues: Porphobilinogen deaminase (315 aa).

Cys234 is modified (S-(dipyrrolylmethanemethyl)cysteine).

This sequence belongs to the HMBS family. Monomer. The cofactor is dipyrromethane.

It catalyses the reaction 4 porphobilinogen + H2O = hydroxymethylbilane + 4 NH4(+). It functions in the pathway porphyrin-containing compound metabolism; protoporphyrin-IX biosynthesis; coproporphyrinogen-III from 5-aminolevulinate: step 2/4. Functionally, tetrapolymerization of the monopyrrole PBG into the hydroxymethylbilane pre-uroporphyrinogen in several discrete steps. This Mycobacterium leprae (strain TN) protein is Porphobilinogen deaminase (hemC).